Here is a 481-residue protein sequence, read N- to C-terminus: tRNA-2-methylthio-N(6)-dimethylallyladenosine synthase (481 aa).

The MTTase N-terminal domain maps to 24–140; it reads KKLFIESYGC…LPNLLAEVEE (117 aa). Positions 33, 69, 103, 178, 182, and 185 each coordinate [4Fe-4S] cluster. The 248-residue stretch at 164–411 folds into the Radical SAM core domain; it reads MSNGITALVS…DLQQKHAWFR (248 aa). Residues 413–476 form the TRAM domain; sequence EEFVGKTVEV…SGTLKGEAVG (64 aa).

The protein belongs to the methylthiotransferase family. MiaB subfamily. Monomer. [4Fe-4S] cluster serves as cofactor.

Its subcellular location is the cytoplasm. It carries out the reaction N(6)-dimethylallyladenosine(37) in tRNA + (sulfur carrier)-SH + AH2 + 2 S-adenosyl-L-methionine = 2-methylsulfanyl-N(6)-dimethylallyladenosine(37) in tRNA + (sulfur carrier)-H + 5'-deoxyadenosine + L-methionine + A + S-adenosyl-L-homocysteine + 2 H(+). Catalyzes the methylthiolation of N6-(dimethylallyl)adenosine (i(6)A), leading to the formation of 2-methylthio-N6-(dimethylallyl)adenosine (ms(2)i(6)A) at position 37 in tRNAs that read codons beginning with uridine. The sequence is that of tRNA-2-methylthio-N(6)-dimethylallyladenosine synthase from Flavobacterium johnsoniae (strain ATCC 17061 / DSM 2064 / JCM 8514 / BCRC 14874 / CCUG 350202 / NBRC 14942 / NCIMB 11054 / UW101) (Cytophaga johnsonae).